Here is a 740-residue protein sequence, read N- to C-terminus: MSSAVRIVEKQLDEILAIARNPAQIRNAGTLAHVDHGKTTTTDSLLMGAGLLSPKVAGKALAMDYVPIEQLRQMTVKAANISLYFEYGGKPYLINFVDTPGHVDFTGHVTRSLRVMDGGLVVVDAVEGVMTQTETVVRQALEEYVRPVLFINKIDRLIKELRLSPQEIQQRILTIVKDFNALIEMFAPPEFKDKWKIDPGKGQMAMGSALHKWGITIPMAQKAGIKFSNIIDAYEKGYVDQLAQEFPLYKTLLSMIIEHVPPPNVAQKYRIPRLWRGDLNSEVGKALLEADPNGPTVIAVSKVNKDPHAGLIVTGRVFSGTIREGDEIYIIGRKMKKKVLQTYIYMGPSRIIVPYMPAGNIVALMGVDEARAGDTLVDPRISDIPPFEKMRYIAEPVVTVAIEPKNPAELAKLVEALKDLVIEDPTLDLKIDQETGQILLSGVGTLHLEIATWLLKERSKTEFTVSPPLIRFRETVRERSQVWEGKSPNKHNRLYFYVEPLDETTIELIATKEITEDQDPRERAKILREKAGWDTDEARGIWAIDDRYFNVIVDKTSGIQYLREIRDYIVQGFRWATEAGPLAQEPIRGVKVVLVDAVVHEDPAHRGPAQIMPATKNAIFAAMLSAKPTVLEPLLRLDIKVAPDYIGAVTSVLNKHRGKILDMTQQEYMAYLRAELPVLESFTISDELRAAAAGKIFWSMQFSRWAPVPESMLLDLVKQLRKKKGLKEEIPKPTDFVEVY.

In terms of domain architecture, tr-type G spans 23–264 (AQIRNAGTLA…MIIEHVPPPN (242 aa)). Residues 32 to 39 (AHVDHGKT), 98 to 102 (DTPGH), and 152 to 155 (NKID) contribute to the GTP site. Residue His605 is modified to Diphthamide.

Belongs to the TRAFAC class translation factor GTPase superfamily. Classic translation factor GTPase family. EF-G/EF-2 subfamily.

Its subcellular location is the cytoplasm. Functionally, catalyzes the GTP-dependent ribosomal translocation step during translation elongation. During this step, the ribosome changes from the pre-translocational (PRE) to the post-translocational (POST) state as the newly formed A-site-bound peptidyl-tRNA and P-site-bound deacylated tRNA move to the P and E sites, respectively. Catalyzes the coordinated movement of the two tRNA molecules, the mRNA and conformational changes in the ribosome. The protein is Elongation factor 2 of Pyrobaculum islandicum (strain DSM 4184 / JCM 9189 / GEO3).